We begin with the raw amino-acid sequence, 352 residues long: Molybdenum import ATP-binding protein ModC (352 aa).

One can recognise an ABC transporter domain in the interval 1-229 (MLELNFSQTL…SVMNPWLPKE (229 aa)). Position 31 to 38 (31 to 38 (GVSGAGKT)) interacts with ATP. A Mop domain is found at 289 to 352 (QTSIRNVLRA…AQIKSVSITA (64 aa)).

Belongs to the ABC transporter superfamily. Molybdate importer (TC 3.A.1.8) family. As to quaternary structure, the complex is composed of two ATP-binding proteins (ModC), two transmembrane proteins (ModB) and a solute-binding protein (ModA).

It is found in the cell inner membrane. It catalyses the reaction molybdate(out) + ATP + H2O = molybdate(in) + ADP + phosphate + H(+). Part of the ABC transporter complex ModABC involved in molybdenum import. Responsible for energy coupling to the transport system. This chain is Molybdenum import ATP-binding protein ModC, found in Shigella boydii serotype 4 (strain Sb227).